The primary structure comprises 129 residues: Succinate dehydrogenase assembly factor 3, mitochondrial (129 aa).

The transit peptide at Met-1–Gly-21 directs the protein to the mitochondrion.

This sequence belongs to the complex I LYR family. SDHAF3 subfamily. As to quaternary structure, interacts with the iron-sulfur protein subunit within the SDH catalytic dimer.

The protein localises to the mitochondrion matrix. In terms of biological role, plays an essential role in the assembly of succinate dehydrogenase (SDH), an enzyme complex (also referred to as respiratory complex II) that is a component of both the tricarboxylic acid (TCA) cycle and the mitochondrial electron transport chain, and which couples the oxidation of succinate to fumarate with the reduction of ubiquinone (coenzyme Q) to ubiquinol. Promotes maturation of the iron-sulfur protein subunit of the SDH catalytic dimer, protecting it from the deleterious effects of oxidants. May act together with SDHAF1. The protein is Succinate dehydrogenase assembly factor 3, mitochondrial of Kluyveromyces lactis (strain ATCC 8585 / CBS 2359 / DSM 70799 / NBRC 1267 / NRRL Y-1140 / WM37) (Yeast).